The primary structure comprises 72 residues: Sec-independent protein translocase protein TatA (72 aa).

The chain crosses the membrane as a helical span at residues 1–21; sequence MPFGLGLPEILVIGVIALLIF. A disordered region spans residues 41-72; sequence KSGVSDEPAPQQSASKETAPNPPQSLPSGKDS.

Belongs to the TatA/E family. Forms a complex with TatC.

Its subcellular location is the cell inner membrane. Part of the twin-arginine translocation (Tat) system that transports large folded proteins containing a characteristic twin-arginine motif in their signal peptide across membranes. TatA could form the protein-conducting channel of the Tat system. In Gloeobacter violaceus (strain ATCC 29082 / PCC 7421), this protein is Sec-independent protein translocase protein TatA.